The following is a 239-amino-acid chain: DNA repair protein RecO (239 aa).

Belongs to the RecO family.

In terms of biological role, involved in DNA repair and RecF pathway recombination. This chain is DNA repair protein RecO, found in Bifidobacterium longum subsp. infantis (strain ATCC 15697 / DSM 20088 / JCM 1222 / NCTC 11817 / S12).